The primary structure comprises 105 residues: Heat shock protein HspQ (105 aa).

Positions 77-105 (MRDEHPEQPSMDELARTIRKQLQAPRLRN) are disordered.

Belongs to the HspQ family.

Its subcellular location is the cytoplasm. Functionally, involved in the degradation of certain denaturated proteins, including DnaA, during heat shock stress. The chain is Heat shock protein HspQ from Salmonella arizonae (strain ATCC BAA-731 / CDC346-86 / RSK2980).